The sequence spans 466 residues: Probable aminotransferase Rv3329 (466 aa).

Residue Lys294 is modified to N6-(pyridoxal phosphate)lysine.

Belongs to the class-III pyridoxal-phosphate-dependent aminotransferase family. The cofactor is pyridoxal 5'-phosphate.

Its function is as follows. Probable aminotransferase. In Mycobacterium tuberculosis (strain ATCC 25618 / H37Rv), this protein is Probable aminotransferase Rv3329.